The chain runs to 369 residues: Chaperone protein DnaJ (369 aa).

The J domain occupies 3–67; it reads DHYEVLGVER…QQRQQYDRGG (65 aa). The segment at 123-205 adopts a CR-type zinc-finger fold; it reads GAHRDLEVDT…CQGQGRVRAR (83 aa). Zn(2+)-binding residues include cysteine 136, cysteine 139, cysteine 153, cysteine 156, cysteine 179, cysteine 182, cysteine 193, and cysteine 196. CXXCXGXG motif repeat units lie at residues 136 to 143, 153 to 160, 179 to 186, and 193 to 200; these read CETCDGSC, CDICHGTG, CGSCRGYG, and CVTCQGQG.

It belongs to the DnaJ family. Homodimer. The cofactor is Zn(2+).

It is found in the cytoplasm. In terms of biological role, participates actively in the response to hyperosmotic and heat shock by preventing the aggregation of stress-denatured proteins and by disaggregating proteins, also in an autonomous, DnaK-independent fashion. Unfolded proteins bind initially to DnaJ; upon interaction with the DnaJ-bound protein, DnaK hydrolyzes its bound ATP, resulting in the formation of a stable complex. GrpE releases ADP from DnaK; ATP binding to DnaK triggers the release of the substrate protein, thus completing the reaction cycle. Several rounds of ATP-dependent interactions between DnaJ, DnaK and GrpE are required for fully efficient folding. Also involved, together with DnaK and GrpE, in the DNA replication of plasmids through activation of initiation proteins. The chain is Chaperone protein DnaJ from Leifsonia xyli subsp. xyli (strain CTCB07).